A 421-amino-acid chain; its full sequence is UDP-N-acetylglucosamine 1-carboxyvinyltransferase (421 aa).

Phosphoenolpyruvate is bound at residue 22–23; it reads KN. Arg92 lines the UDP-N-acetyl-alpha-D-glucosamine pocket. Cys116 (proton donor) is an active-site residue. At Cys116 the chain carries 2-(S-cysteinyl)pyruvic acid O-phosphothioketal. Asp307 and Val329 together coordinate UDP-N-acetyl-alpha-D-glucosamine.

Belongs to the EPSP synthase family. MurA subfamily.

It is found in the cytoplasm. The catalysed reaction is phosphoenolpyruvate + UDP-N-acetyl-alpha-D-glucosamine = UDP-N-acetyl-3-O-(1-carboxyvinyl)-alpha-D-glucosamine + phosphate. Its pathway is cell wall biogenesis; peptidoglycan biosynthesis. Cell wall formation. Adds enolpyruvyl to UDP-N-acetylglucosamine. The chain is UDP-N-acetylglucosamine 1-carboxyvinyltransferase from Kosmotoga olearia (strain ATCC BAA-1733 / DSM 21960 / TBF 19.5.1).